The sequence spans 244 residues: uncharacterized protein (244 aa).

4 helical membrane-spanning segments follow: residues 20–42, 49–67, 82–101, and 108–125; these read TITA…VVLI, FVYI…ATKV, TPSI…ASVF, and AFLV…ATPI.

The protein localises to the cell membrane. This is an uncharacterized protein from Archaeoglobus fulgidus (strain ATCC 49558 / DSM 4304 / JCM 9628 / NBRC 100126 / VC-16).